The sequence spans 453 residues: Ribosomal protein uS12 methylthiotransferase RimO (453 aa).

The 117-residue stretch at 4–120 folds into the MTTase N-terminal domain; it reads TSVHIVSLGC…IADHLRVLME (117 aa). [4Fe-4S] cluster-binding residues include cysteine 13, cysteine 49, cysteine 83, cysteine 161, cysteine 165, and cysteine 168. In terms of domain architecture, Radical SAM core spans 147-377; sequence STPPYSAYLK…MEEQAVISHE (231 aa). The TRAM domain maps to 380–450; it reads QTLVGSLQEV…DYDLFAEVIS (71 aa).

Belongs to the methylthiotransferase family. RimO subfamily. Requires [4Fe-4S] cluster as cofactor.

Its subcellular location is the cytoplasm. The catalysed reaction is L-aspartate(89)-[ribosomal protein uS12]-hydrogen + (sulfur carrier)-SH + AH2 + 2 S-adenosyl-L-methionine = 3-methylsulfanyl-L-aspartate(89)-[ribosomal protein uS12]-hydrogen + (sulfur carrier)-H + 5'-deoxyadenosine + L-methionine + A + S-adenosyl-L-homocysteine + 2 H(+). In terms of biological role, catalyzes the methylthiolation of an aspartic acid residue of ribosomal protein uS12. In Syntrophus aciditrophicus (strain SB), this protein is Ribosomal protein uS12 methylthiotransferase RimO.